Here is a 1114-residue protein sequence, read N- to C-terminus: Brother of CDO (1114 aa).

The first 30 residues, 1 to 30 (MLRGTMTAWRGMRPEVTLACLLLATAGCFA), serve as a signal peptide directing secretion. Topologically, residues 31–855 (DLNEVPQVTV…MVARSSDLPY (825 aa)) are extracellular. Ig-like C2-type domains follow at residues 36–123 (PQVT…ATVT), 129–213 (DFKL…VKTS), 235–315 (PEAQ…VILY), and 323–409 (PEVT…LRTS). 4 cysteine pairs are disulfide-bonded: Cys57–Cys106, Cys150–Cys200, Cys252–Cys299, and Cys344–Cys391. Residues Asn65, Asn76, Asn98, Asn189, and Asn275 are each glycosylated (N-linked (GlcNAc...) asparagine). The disordered stretch occupies residues 422 to 474 (ELATGTPPVSPSKLGNPEQMLRGQPALPRPPTSVGPASPQCPGEKGQGAPAEA). 3 Fibronectin type-III domains span residues 474-571 (APII…GRRP), 608-703 (APDR…VVSG), and 712-812 (PVAG…TKAR). N-linked (GlcNAc...) asparagine glycosylation occurs at Asn517. The tract at residues 577-615 (ASKEQQIQRDDPGASPQSSSQPDHGRLSPPEAPDRPTIS) is disordered. 2 N-linked (GlcNAc...) asparagine glycosylation sites follow: Asn725 and Asn759. The segment at 812-833 (RKSSGQPGRLPPPTLAPPQPPL) is disordered. Positions 820–833 (RLPPPTLAPPQPPL) are enriched in pro residues. Residues 856–876 (LIVGVVLGSIVLIIVTFIPFC) form a helical membrane-spanning segment. Residues 877–1114 (LWRAWSKQKH…VSFETPPLTI (238 aa)) are Cytoplasmic-facing. A compositionally biased stretch (polar residues) spans 972–986 (QTHLGNGYDPQSHQI). Residues 972–998 (QTHLGNGYDPQSHQITRGPKSSPDEGS) are disordered.

As to quaternary structure, part of a complex that contains BOC, CDON, NEO1, cadherins and CTNNB1. Interacts with NTN3. Interacts with SHH, DHH and IHH. Interacts with CDH2 and CTNNB1. Interacts with CDH15 only during the early stages of myoblast differentiation. In terms of processing, N-glycosylated. As to expression, detected in skeletal muscle, heart, thymus, kidney and small intestine. Detected at lower levels in brain, placenta, lung and colon mucosa.

The protein resides in the cell membrane. In terms of biological role, component of a cell-surface receptor complex that mediates cell-cell interactions between muscle precursor cells. Promotes differentiation of myogenic cells. The chain is Brother of CDO (BOC) from Homo sapiens (Human).